Here is a 213-residue protein sequence, read N- to C-terminus: High frequency lysogenization protein HflD homolog (213 aa).

The stretch at 79 to 122 (QGLNAELTRYTLSLMVLERKLSSAKGALNTLGDRINGLQRQLDH) forms a coiled coil.

Belongs to the HflD family.

Its subcellular location is the cytoplasm. It is found in the cell inner membrane. This chain is High frequency lysogenization protein HflD homolog, found in Salmonella agona (strain SL483).